A 494-amino-acid polypeptide reads, in one-letter code: DEAD-box ATP-dependent RNA helicase 20 (494 aa).

Positions 1–20 (MSRFDGRAADPGSYRDRRSE) are enriched in basic and acidic residues. The tract at residues 1–39 (MSRFDGRAADPGSYRDRRSEGAFGGGTRAFAPTSKADSA) is disordered. Low complexity predominate over residues 29–39 (AFAPTSKADSA). A Q motif motif is present at residues 91–119 (REFRDVGFPEYVLQEITKAGFVEPTPIQS). A Helicase ATP-binding domain is found at 122–297 (WPMALRGRDL…RNFLFDPYKV (176 aa)). 135–142 (AETGSGKT) provides a ligand contact to ATP. The short motif at 245-248 (DEAD) is the DEAD box element. The 146-residue stretch at 325–470 (KLVNLLEDIM…KVSPELANMG (146 aa)) folds into the Helicase C-terminal domain. The segment at 465–494 (ELANMGRGAPPPSSGHRDRYRGYGGGRSWS) is disordered.

It belongs to the DEAD box helicase family. DDX5/DBP2 subfamily.

The protein localises to the nucleus. The enzyme catalyses ATP + H2O = ADP + phosphate + H(+). In terms of biological role, ATP-dependent RNA helicase involved nonsense-mediated mRNA decay and ribosome biogenesis through rRNA processing. This Oryza sativa subsp. japonica (Rice) protein is DEAD-box ATP-dependent RNA helicase 20.